Reading from the N-terminus, the 183-residue chain is 2-epi-5-epi-valiolone epimerase (183 aa).

The 145-residue stretch at 11–155 (AVHHVAYTVP…WGMQLELINL (145 aa)) folds into the VOC domain. The a divalent metal cation site is built by His14, Glu76, His99, and Glu151.

As to quaternary structure, homodimer. A divalent metal cation is required as a cofactor.

The enzyme catalyses 2-epi-5-epi-valiolone = 5-epi-valiolone. It functions in the pathway antibiotic biosynthesis. Functionally, catalyzes the epimerization of 2-epi-5-epi-valiolone to 5-epi-valiolone. Involved in cetoniacytone A biosynthesis. The protein is 2-epi-5-epi-valiolone epimerase of Actinomyces sp.